The chain runs to 2090 residues: Ninein (2090 aa).

2 EF-hand domains span residues 8 to 43 (QHEA…LSLE) and 42 to 77 (LEEV…ILSR). Phosphoserine is present on S152. EF-hand domains lie at 182 to 217 (WIEE…YGLQ) and 219 to 252 (VDGE…NGKS). GTP is bound at residue 245–252 (GLFKNGKS). S269 carries the post-translational modification Phosphoserine. GTP is bound at residue 300-304 (DGMGH). In terms of domain architecture, EF-hand 5 spans 317-352 (EGIENSQEILKALDFSLDGNINLTELTLALENELLV). Positions 357–570 (IHQAALASFK…YRAQGRVLRL (214 aa)) form a coiled coil. 420-423 (RKLD) lines the GTP pocket. Positions 574-595 (NSPSEEVEANSGGIEPEHGLGS) are disordered. 4 coiled-coil regions span residues 625–1027 (LRLE…QATS), 1068–1099 (LSLQ…QKLE), 1181–1341 (SELE…SVVQ), and 1441–1816 (QDKH…AGGK). The important for interaction with CEP170 stretch occupies residues 802-1505 (KMETECNRRT…HDLQITCSEM (704 aa)). The disordered stretch occupies residues 1152 to 1190 (VRDLGSTGTSSVQRQEVKIEESEASVEGFSELENSEETR). A phosphoserine mark is found at S1550 and S1837. Coiled coils occupy residues 1854-1885 (QENE…SNLL) and 1922-2067 (ANRK…QVSL).

As to quaternary structure, homooligomer. Interacts with GSK3B/GSK3-beta via its C-terminal domain. Interacts with C14ORF166, such interaction may prevent its phosphorylation by GSK3B. Interacts with AUNIP (via N-terminus). Identified in a complex with AUNIP and AURKA. Interacts with CCDC120. Interacts (via C-terminus) with CEP250. Interacts with CEP170. Interacts with the gamma-tubulin ring complex component TUBGCP3. Interacts with gamma-tubulin. Isoform 6 does not interact with CEP170 or CEP250. In terms of processing, phosphorylated by AURKA/Aurora kinase A and PKA kinases but not CK2 or AURKB/ Aurora kinase B. In terms of tissue distribution, ubiquitous. Highly expressed in heart and skeletal muscle. Isoform 1 is more expressed than isoform 5.

The protein localises to the cytoplasm. It is found in the cytoskeleton. Its subcellular location is the microtubule organizing center. It localises to the centrosome. The protein resides in the centriole. Centrosomal protein required in the positioning and anchorage of the microtubule minus-end in epithelial cells. May also act as a centrosome maturation factor. May play a role in microtubule nucleation, by recruiting the gamma-tubulin ring complex to the centrosome. Overexpression does not perturb nucleation or elongation of microtubules but suppresses release of microtubules. Required for centriole organization and microtubule anchoring at the mother centriole. This Homo sapiens (Human) protein is Ninein (NIN).